The chain runs to 53 residues: ATP synthase protein 8 (53 aa).

A helical transmembrane segment spans residues 10–30 (IMVFLVSMALLWAIMTMVFFL).

It belongs to the ATPase protein 8 family. F-type ATPases have 2 components, CF(1) - the catalytic core - and CF(0) - the membrane proton channel.

Its subcellular location is the mitochondrion membrane. Its function is as follows. Mitochondrial membrane ATP synthase (F(1)F(0) ATP synthase or Complex V) produces ATP from ADP in the presence of a proton gradient across the membrane which is generated by electron transport complexes of the respiratory chain. F-type ATPases consist of two structural domains, F(1) - containing the extramembraneous catalytic core and F(0) - containing the membrane proton channel, linked together by a central stalk and a peripheral stalk. During catalysis, ATP synthesis in the catalytic domain of F(1) is coupled via a rotary mechanism of the central stalk subunits to proton translocation. Part of the complex F(0) domain. Minor subunit located with subunit a in the membrane. In Artemia franciscana (Brine shrimp), this protein is ATP synthase protein 8 (MT-ATP8).